A 506-amino-acid chain; its full sequence is Histidine ammonia-lyase (506 aa).

The 5-imidazolinone (Ala-Gly) cross-link spans 144–146 (ASG). Ser145 is modified (2,3-didehydroalanine (Ser)).

It belongs to the PAL/histidase family. Contains an active site 4-methylidene-imidazol-5-one (MIO), which is formed autocatalytically by cyclization and dehydration of residues Ala-Ser-Gly.

Its subcellular location is the cytoplasm. It carries out the reaction L-histidine = trans-urocanate + NH4(+). The protein operates within amino-acid degradation; L-histidine degradation into L-glutamate; N-formimidoyl-L-glutamate from L-histidine: step 1/3. This chain is Histidine ammonia-lyase, found in Legionella pneumophila (strain Lens).